The primary structure comprises 50 residues: Bacteriocin-like protein SboX (50 aa).

This chain is Bacteriocin-like protein SboX (sboX), found in Bacillus subtilis (strain 168).